Consider the following 803-residue polypeptide: Homeobox protein Wariai (803 aa).

Polar residues predominate over residues 23–41 (SDYDSYEQQYNNPTGSKQY). Residues 23 to 144 (SDYDSYEQQY…PTPYSSNSFS (122 aa)) are disordered. Positions 42–124 (NNNNNNNTNT…NNNNNNNNNN (83 aa)) are enriched in low complexity. The segment covering 125 to 138 (QHLSQSQQLSPTPY) has biased composition (polar residues). A DNA-binding region (homeobox) is located at residues 162–221 (SKKKRKRTSPDQLKLLEKIFMAHQHPNLNLRSQLAVELHMTARSVQIWFQNRRAKARNME). Residues 288–330 (INGNMGGGGGGGGGSHNHHHHNHNHNHHNHNHNHNHNQPLSNG) are disordered. Gly residues predominate over residues 291–302 (NMGGGGGGGGGS). Positions 303–322 (HNHHHHNHNHNHHNHNHNHN) are enriched in basic residues. ANK repeat units follow at residues 374-403 (KGLSLLFTAAFLGYEYQVRRLIESGANPNI), 407-436 (QGNTPLIAASVLGNQPIVELLLEHRADPNL), 440-469 (EGVSPLFSACKGGHLQIASSLLDHDAEVSV), 474-503 (NGETPLHIASLKGFEKICKLLIETEAKASV), 507-536 (NNRTPLHHACIMGYFSIAKLLICNGADMNA), 540-569 (DGHTPLHTSSLMGHDLITRLLLENGADPNI), 573-602 (EGYTPIHYAVRESRIETVKFLIKFNSKLNI), 606-636 (NGQNLIHLSVQFASLMMGQMIFESKGCEIAA), and 642-671 (QGYTPLYLAAKAGKTNFVKYLLSKGASKKI). The tract at residues 695-760 (KSSNNNNSNS…PPGNKFEEDD (66 aa)) is disordered. Over residues 696–746 (SSNNNNSNSNINNINNINNINNINSQPNTNSDNNNNNNNNNFNENYSNGNN) the composition is skewed to low complexity.

It is found in the nucleus. Its function is as follows. Putative transcription factor, that seems to be involved in anterior-posterior patterning of the slug, probably by controlling the proportions of prestalk and prespore cells. This Dictyostelium discoideum (Social amoeba) protein is Homeobox protein Wariai (warA).